An 806-amino-acid chain; its full sequence is Integrin beta-7 (806 aa).

An N-terminal signal peptide occupies residues 1–19; the sequence is MVDSSTVLIFLLVLGGGQS. Residues 20-724 are Extracellular-facing; that stretch reads ELDTKITSSG…PQEKGVDHTR (705 aa). Residues 44–92 enclose the PSI domain; the sequence is SCQPVPSCQKCILSHPSCAWCKQLNFTASGEAEARRCARREELLARGCP. 26 disulfide bridges follow: Cys51-Cys476, Cys54-Cys80, Cys64-Cys91, Cys216-Cys223, Cys271-Cys311, Cys412-Cys428, Cys448-Cys474, Cys478-Cys497, Cys488-Cys500, Cys502-Cys511, Cys513-Cys545, Cys527-Cys543, Cys537-Cys548, Cys550-Cys559, Cys561-Cys582, Cys566-Cys580, Cys574-Cys585, Cys587-Cys596, Cys598-Cys621, Cys605-Cys619, Cys613-Cys624, Cys626-Cys635, Cys638-Cys641, Cys645-Cys688, Cys651-Cys670, and Cys654-Cys666. Residue Asn68 is glycosylated (N-linked (GlcNAc...) asparagine). A compositionally biased stretch (basic and acidic residues) spans 98 to 107; that stretch reads EPRGRQEVLQ. The disordered stretch occupies residues 98–123; sequence EPRGRQEVLQDKPLSQGDRGEGATQL. One can recognise a VWFA domain in the interval 150-389; that stretch reads YPVDLYYLMD…QLIMDAYDSL (240 aa). Ser161 and Ser163 together coordinate Mg(2+). Residues Ser163, Asp166, Asp167, and Asp198 each contribute to the Ca(2+) site. Asn250 carries an N-linked (GlcNAc...) asparagine glycan. Positions 254, 256, 258, and 259 each coordinate Ca(2+). Glu259 is a Mg(2+) binding site. An N-linked (GlcNAc...) asparagine glycan is attached at Asn279. Residues Asp289 and Glu373 each coordinate Ca(2+). Asn434 is a glycosylation site (N-linked (GlcNAc...) asparagine). I-EGF domains follow at residues 478 to 512, 513 to 560, 561 to 597, and 598 to 636; these read CGDA…QLCE, CSEA…RLCE, CDDA…RACE, and CSKS…ALCD. Asn531 carries N-linked (GlcNAc...) asparagine glycosylation. The N-linked (GlcNAc...) asparagine glycan is linked to Asn590. N-linked (GlcNAc...) asparagine glycosylation is found at Asn665 and Asn674. The helical transmembrane segment at 725–745 threads the bilayer; sequence AIILGCTGGIVAVGLGLVLAY. The Cytoplasmic segment spans residues 746–806; that stretch reads RLSVEIYDRR…PSLSLTREAD (61 aa). The disordered stretch occupies residues 786-806; that stretch reads NPRFQGTNGRSPSLSLTREAD.

Belongs to the integrin beta chain family. As to quaternary structure, heterodimer of an alpha and a beta subunit. ITGB7/beta-7 associates with either ITGA4/alpha-4 or ITGAE/alpha-E. Integrin ITGA4/ITGB7 interacts with MADCAM1. Integrin ITGA4/ITGB7 interacts with VCAM1 and fibronectin. Interacts with FLNA (via filamin repeats 4, 9, 12, 17, 19, 21, and 23).

Its subcellular location is the cell membrane. Integrin ITGA4/ITGB7 (alpha-4/beta-7) (Peyer patches-specific homing receptor LPAM-1) is an adhesion molecule that mediates lymphocyte migration and homing to gut-associated lymphoid tissue (GALT). Integrin ITGA4/ITGB7 interacts with the cell surface adhesion molecules MADCAM1 which is normally expressed by the vascular endothelium of the gastrointestinal tract. Also interacts with VCAM1 and fibronectin, an extracellular matrix component. It recognizes one or more domains within the alternatively spliced CS-1 region of fibronectin. Interactions involve the tripeptide L-D-T in MADCAM1, and L-D-V in fibronectin. Integrin ITGAE/ITGB7 (alpha-E/beta-7, HML-1) is a receptor for E-cadherin. In Mus musculus (Mouse), this protein is Integrin beta-7 (Itgb7).